Here is a 339-residue protein sequence, read N- to C-terminus: NADH-quinone oxidoreductase subunit H (339 aa).

A run of 9 helical transmembrane segments spans residues 9–29 (IFPLIIIALKVVAITIPLILC), 50–70 (PNVVGPFGLLQPIADAVKLLF), 82–102 (ILFILAPMITFILSLIGWAVI), 115–135 (VGVLYILAISSLSVYGIIIAG), 161–181 (MGLVIITVLLTTGTLNLSEII), 187–207 (IPWWIDLMLLPMGVVFFISVL), 235–255 (MGFALFFLGEYANMILVSAMT), 275–295 (IPGFFWFVFKVGFLLFCFLWI), and 311–331 (GWKVFLPLTLFWVVLVSSVLV).

The protein belongs to the complex I subunit 1 family. NDH-1 is composed of 14 different subunits. Subunits NuoA, H, J, K, L, M, N constitute the membrane sector of the complex.

The protein localises to the cell inner membrane. The catalysed reaction is a quinone + NADH + 5 H(+)(in) = a quinol + NAD(+) + 4 H(+)(out). Functionally, NDH-1 shuttles electrons from NADH, via FMN and iron-sulfur (Fe-S) centers, to quinones in the respiratory chain. The immediate electron acceptor for the enzyme in this species is believed to be ubiquinone. Couples the redox reaction to proton translocation (for every two electrons transferred, four hydrogen ions are translocated across the cytoplasmic membrane), and thus conserves the redox energy in a proton gradient. This subunit may bind ubiquinone. In Rickettsia rickettsii (strain Iowa), this protein is NADH-quinone oxidoreductase subunit H.